Consider the following 164-residue polypeptide: Dehydrin Rab16C (164 aa).

Over residues 42–51 (MGGHHAGAGG) the composition is skewed to gly residues. The disordered stretch occupies residues 42–164 (MGGHHAGAGG…KIKEKLPGQH (123 aa)). Positions 105–115 (GNNHQQQQMMG) are enriched in low complexity. Over residues 128–138 (GMTGAGTGTGV) the composition is skewed to gly residues. Residues 147-164 (GEKKGFMDKIKEKLPGQH) show a composition bias toward basic and acidic residues.

Belongs to the plant dehydrin family.

The polypeptide is Dehydrin Rab16C (RAB16C) (Oryza sativa subsp. indica (Rice)).